Reading from the N-terminus, the 361-residue chain is Chorismate synthase (361 aa).

The NADP(+) site is built by Arg48 and Arg54. Residues 125–127, 238–239, Gly278, 293–297, and Arg319 contribute to the FMN site; these read RSS, NA, and KPTSS.

It belongs to the chorismate synthase family. In terms of assembly, homotetramer. FMNH2 serves as cofactor.

The enzyme catalyses 5-O-(1-carboxyvinyl)-3-phosphoshikimate = chorismate + phosphate. Its pathway is metabolic intermediate biosynthesis; chorismate biosynthesis; chorismate from D-erythrose 4-phosphate and phosphoenolpyruvate: step 7/7. Catalyzes the anti-1,4-elimination of the C-3 phosphate and the C-6 proR hydrogen from 5-enolpyruvylshikimate-3-phosphate (EPSP) to yield chorismate, which is the branch point compound that serves as the starting substrate for the three terminal pathways of aromatic amino acid biosynthesis. This reaction introduces a second double bond into the aromatic ring system. This is Chorismate synthase from Salmonella arizonae (strain ATCC BAA-731 / CDC346-86 / RSK2980).